Consider the following 320-residue polypeptide: Cytochrome f (320 aa).

The N-terminal stretch at Met-1–Ala-35 is a signal peptide. Positions 36, 56, 59, and 60 each coordinate heme. Residues Val-286–Lys-306 form a helical membrane-spanning segment.

This sequence belongs to the cytochrome f family. The 4 large subunits of the cytochrome b6-f complex are cytochrome b6, subunit IV (17 kDa polypeptide, petD), cytochrome f and the Rieske protein, while the 4 small subunits are PetG, PetL, PetM and PetN. The complex functions as a dimer. Heme is required as a cofactor.

Its subcellular location is the plastid. The protein localises to the chloroplast thylakoid membrane. Its function is as follows. Component of the cytochrome b6-f complex, which mediates electron transfer between photosystem II (PSII) and photosystem I (PSI), cyclic electron flow around PSI, and state transitions. The polypeptide is Cytochrome f (Drimys granadensis).